The primary structure comprises 100 residues: Small ribosomal subunit protein uS14c (100 aa).

The protein belongs to the universal ribosomal protein uS14 family. In terms of assembly, part of the 30S ribosomal subunit.

It is found in the plastid. The protein localises to the chloroplast. Binds 16S rRNA, required for the assembly of 30S particles. The sequence is that of Small ribosomal subunit protein uS14c from Chlorokybus atmophyticus (Soil alga).